A 295-amino-acid chain; its full sequence is uncharacterized protein (295 aa).

NAD(+) is bound by residues 11-25 (GYIGLGNQGAPMAKR) and Thr-101. Lys-176 is an active-site residue. Lys-252 provides a ligand contact to NAD(+).

It belongs to the HIBADH-related family.

This is an uncharacterized protein from Mycobacterium tuberculosis (strain CDC 1551 / Oshkosh).